We begin with the raw amino-acid sequence, 73 residues long: Large ribosomal subunit protein bL31 (73 aa).

4 residues coordinate Zn(2+): C16, C18, C36, and C39.

This sequence belongs to the bacterial ribosomal protein bL31 family. Type A subfamily. In terms of assembly, part of the 50S ribosomal subunit. Zn(2+) serves as cofactor.

Its function is as follows. Binds the 23S rRNA. The sequence is that of Large ribosomal subunit protein bL31 from Myxococcus xanthus (strain DK1622).